Here is a 442-residue protein sequence, read N- to C-terminus: FBD-associated F-box protein At1g66310 (442 aa).

Positions 18-64 (VDWLRDLPESLLCHILLNLPTKDVVKTSVLSSKWRNLWRLVPGLDLD) constitute an F-box domain. In terms of domain architecture, FBD spans 363–415 (KRRTSVLSGPRRLLSSLEYVEIESPLTGEVFEMKLVSYLLENSPILKKLTINL).

The sequence is that of FBD-associated F-box protein At1g66310 from Arabidopsis thaliana (Mouse-ear cress).